The primary structure comprises 82 residues: Ranatensin (82 aa).

The N-terminal stretch at 1-27 (MTTIPAIGILPIDFLTILLLFSFISHS) is a signal peptide. The propeptide occupies 28-47 (VCVEFAEDAGELDKSNAFRR). Residue M58 is modified to Methionine amide. Positions 62-82 (SLSDDTEQATMYSSRFVESTS) are excised as a propeptide.

This sequence belongs to the bombesin/neuromedin-B/ranatensin family. As to expression, expressed by the skin glands.

The protein resides in the secreted. The protein is Ranatensin of Lithobates pipiens (Northern leopard frog).